Here is a 633-residue protein sequence, read N- to C-terminus: Chaperone protein HtpG (633 aa).

Residues 1–341 (MTAPHETMSF…SADLPLNVSR (341 aa)) form an a; substrate-binding region. The segment at 342 to 562 (ELLQESRDVK…DGDMSGYLQR (221 aa)) is b. Positions 563–633 (LLKQAGQKAP…YVQRVNRLLA (71 aa)) are c.

Belongs to the heat shock protein 90 family. Homodimer.

It is found in the cytoplasm. In terms of biological role, molecular chaperone. Has ATPase activity. In Cupriavidus metallidurans (strain ATCC 43123 / DSM 2839 / NBRC 102507 / CH34) (Ralstonia metallidurans), this protein is Chaperone protein HtpG.